We begin with the raw amino-acid sequence, 201 residues long: Small ribosomal subunit protein uS4c (201 aa).

Positions 20-44 (GLTNKKPRAGSDLRNQSRSGKKSQY) are disordered. In terms of domain architecture, S4 RNA-binding spans 89-150 (MRLDNILFRL…EQKSKALIQI (62 aa)).

The protein belongs to the universal ribosomal protein uS4 family. In terms of assembly, part of the 30S ribosomal subunit. Contacts protein S5. The interaction surface between S4 and S5 is involved in control of translational fidelity.

The protein resides in the plastid. The protein localises to the chloroplast. Its function is as follows. One of the primary rRNA binding proteins, it binds directly to 16S rRNA where it nucleates assembly of the body of the 30S subunit. With S5 and S12 plays an important role in translational accuracy. This chain is Small ribosomal subunit protein uS4c (rps4), found in Nicotiana tomentosiformis (Tobacco).